Consider the following 158-residue polypeptide: Small ribosomal subunit protein uS7 (158 aa).

Belongs to the universal ribosomal protein uS7 family. In terms of assembly, part of the 30S ribosomal subunit. Contacts proteins S9 and S11.

One of the primary rRNA binding proteins, it binds directly to 16S rRNA where it nucleates assembly of the head domain of the 30S subunit. Is located at the subunit interface close to the decoding center, probably blocks exit of the E-site tRNA. The polypeptide is Small ribosomal subunit protein uS7 (Flavobacterium johnsoniae (strain ATCC 17061 / DSM 2064 / JCM 8514 / BCRC 14874 / CCUG 350202 / NBRC 14942 / NCIMB 11054 / UW101) (Cytophaga johnsonae)).